A 752-amino-acid polypeptide reads, in one-letter code: Photosystem I P700 chlorophyll a apoprotein A1 (752 aa).

8 consecutive transmembrane segments (helical) span residues 73–96, 159–182, 198–222, 294–312, 349–372, 388–414, 436–458, and 533–551; these read IFSA…FHGA, LYWI…FHYH, MNHH…HVAL, IAHH…GHMY, WHAQ…HHMY, LSLF…IFMV, SIIA…FYIH, and FMVH…LILL. [4Fe-4S] cluster contacts are provided by Cys-575 and Cys-584. 2 consecutive transmembrane segments (helical) span residues 591–612 and 666–688; these read HVFL…HFSW and ASAY…MFLF. Residue His-677 coordinates chlorophyll a'. Residues Met-685 and Tyr-693 each coordinate chlorophyll a. Trp-694 contacts phylloquinone. The helical transmembrane segment at 726–746 threads the bilayer; sequence AVGLAHYLLGGIGTTWAFFLA.

It belongs to the PsaA/PsaB family. The PsaA/B heterodimer binds the P700 chlorophyll special pair and subsequent electron acceptors. PSI consists of a core antenna complex that captures photons, and an electron transfer chain that converts photonic excitation into a charge separation. The eukaryotic PSI reaction center is composed of at least 11 subunits. P700 is a chlorophyll a/chlorophyll a' dimer, A0 is one or more chlorophyll a, A1 is one or both phylloquinones and FX is a shared 4Fe-4S iron-sulfur center. is required as a cofactor.

It localises to the plastid. The protein resides in the chloroplast thylakoid membrane. The catalysed reaction is reduced [plastocyanin] + hnu + oxidized [2Fe-2S]-[ferredoxin] = oxidized [plastocyanin] + reduced [2Fe-2S]-[ferredoxin]. PsaA and PsaB bind P700, the primary electron donor of photosystem I (PSI), as well as the electron acceptors A0, A1 and FX. PSI is a plastocyanin/cytochrome c6-ferredoxin oxidoreductase, converting photonic excitation into a charge separation, which transfers an electron from the donor P700 chlorophyll pair to the spectroscopically characterized acceptors A0, A1, FX, FA and FB in turn. Oxidized P700 is reduced on the lumenal side of the thylakoid membrane by plastocyanin or cytochrome c6. This Phaeodactylum tricornutum (strain CCAP 1055/1) protein is Photosystem I P700 chlorophyll a apoprotein A1.